Here is a 272-residue protein sequence, read N- to C-terminus: MRPAELIRFKQSGRAITMLTAWDALSAALVEEAGADVVLVGDSLAMVVLGHATTLPVTLEHMLHHTQAVCRGMSKPLAQQPLVVCDLPFLSYQCGLDRAVAAAGTILKESDAAAIKLEGGEPEIVAVVDRLVRMGIPVMGHLGLTPQAVHRLGYRRQGIDPRSQDKLHRQAQALQDAGCFSLVVEHVPSELAGRLRRTLSIPVIGIGAGPDCDGQVSVTADLLGLTPSQPPFTPARMQGRELSINALKSWLKEQRDQRATPTTPPPPPAPDC.

Asp42 and Asp86 together coordinate Mg(2+). Residues 42–43, Asp86, and Lys116 each bind 3-methyl-2-oxobutanoate; that span reads DS. Glu118 contributes to the Mg(2+) binding site. Glu185 acts as the Proton acceptor in catalysis. A disordered region spans residues 251 to 272; the sequence is LKEQRDQRATPTTPPPPPAPDC. The segment covering 262–272 has biased composition (pro residues); it reads TTPPPPPAPDC.

It belongs to the PanB family. In terms of assembly, homodecamer; pentamer of dimers. It depends on Mg(2+) as a cofactor.

It localises to the cytoplasm. The catalysed reaction is 3-methyl-2-oxobutanoate + (6R)-5,10-methylene-5,6,7,8-tetrahydrofolate + H2O = 2-dehydropantoate + (6S)-5,6,7,8-tetrahydrofolate. It functions in the pathway cofactor biosynthesis; (R)-pantothenate biosynthesis; (R)-pantoate from 3-methyl-2-oxobutanoate: step 1/2. In terms of biological role, catalyzes the reversible reaction in which hydroxymethyl group from 5,10-methylenetetrahydrofolate is transferred onto alpha-ketoisovalerate to form ketopantoate. This is 3-methyl-2-oxobutanoate hydroxymethyltransferase from Synechococcus sp. (strain CC9311).